Reading from the N-terminus, the 517-residue chain is Sugar transport protein MST1 (517 aa).

At 1–25 the chain is on the cytoplasmic side; it reads MAGGVIVANDGDGSAVDHGGRLTFS. Residues 26-46 traverse the membrane as a helical segment; it reads VVITCLVAASGGLIFGYDVGI. Topologically, residues 47 to 83 are extracellular; the sequence is SGGVSTMEPFLRRFFPGVVRRMAEARPGNEYCVYDSQ. A helical transmembrane segment spans residues 84–104; it reads ALTAFTSSLYVAGLVASLVAS. Topologically, residues 105–120 are cytoplasmic; that stretch reads RVTRAMGRQAVMVMGG. A helical transmembrane segment spans residues 121 to 141; that stretch reads ALFFAGGAVTGFAVNIAMLIV. Residues 142-143 are Extracellular-facing; the sequence is GR. The chain crosses the membrane as a helical span at residues 144-164; it reads MLLGFGVGFTNQAAPLFLAEM. Residues 165–170 lie on the Cytoplasmic side of the membrane; that stretch reads APTRWR. The helical transmembrane segment at 171–191 threads the bilayer; that stretch reads GSLTAGFQFFLAVGVVIATVT. Topologically, residues 192–203 are extracellular; sequence NYFASRVPWGWR. A helical transmembrane segment spans residues 204-224; it reads LSLGLAGAPAVVIFLGALFLT. The Cytoplasmic portion of the chain corresponds to 225 to 288; it reads DTPSSLVMRG…AARREYRPYL (64 aa). Residues 289–309 traverse the membrane as a helical segment; sequence VFAVAMPMFFQLTGVIVISFF. Over 310–325 the chain is Extracellular; sequence SPLVFRTVGFGSNAAL. The helical transmembrane segment at 326 to 346 threads the bilayer; the sequence is MGNVILGAVNLVCLMLSTLVI. The Cytoplasmic segment spans residues 347-352; sequence DRYGRK. Residues 353–373 traverse the membrane as a helical segment; that stretch reads VLFMVGGAIMIIAQVGVAWIM. Over 374 to 389 the chain is Extracellular; that stretch reads GAQVGKNGSEAMARPY. A helical membrane pass occupies residues 390–410; that stretch reads AVAVVAFTCLHTAGFGWSWGP. Topologically, residues 411 to 430 are cytoplasmic; that stretch reads LGWVIPGEIFPVDIRSAGQA. A helical membrane pass occupies residues 431 to 451; the sequence is MNVSIGLGLTFVQTQSFLAML. The Extracellular portion of the chain corresponds to 452-456; sequence CRFRY. The chain crosses the membrane as a helical span at residues 457 to 477; sequence GTFAYYAAWVAVMTVFIAVFL. Residues 478-517 are Cytoplasmic-facing; sequence PETKGVPLESMATVWARHWYWKRFAREQPKTSADEPTGTY.

This sequence belongs to the major facilitator superfamily. Sugar transporter (TC 2.A.1.1) family.

The protein resides in the membrane. In terms of biological role, mediates active uptake of hexoses by sugar:proton symport. The polypeptide is Sugar transport protein MST1 (Oryza sativa subsp. japonica (Rice)).